Consider the following 98-residue polypeptide: Class II hydrophobin 2 (98 aa).

Positions 1 to 21 are cleaved as a signal peptide; the sequence is MFFSRISTIVSMTALFASALA. Disulfide bonds link cysteine 34-cysteine 80, cysteine 41-cysteine 71, cysteine 42-cysteine 54, and cysteine 81-cysteine 92.

The protein belongs to the cerato-ulmin hydrophobin family.

The protein localises to the secreted. It is found in the cell wall. Functionally, aerial growth, conidiation, and dispersal of filamentous fungi in the environment rely upon a capability of their secreting small amphipathic proteins called hydrophobins (HPBs) with low sequence identity. Class I can self-assemble into an outermost layer of rodlet bundles on aerial cell surfaces, conferring cellular hydrophobicity that supports fungal growth, development and dispersal; whereas Class II form highly ordered films at water-air interfaces through intermolecular interactions but contribute nothing to the rodlet structure. In Botryotinia fuckeliana, hydrophobins are not involved in conferring surface hydrophobicity to conidia and aerial hyphae and their function in sclerotia and fruiting bodies remains to be investigated. The sequence is that of Class II hydrophobin 2 from Botryotinia fuckeliana (strain B05.10) (Noble rot fungus).